The following is a 436-amino-acid chain: Anhydro-N-acetylmuramic acid kinase (436 aa).

32–39 (GTSLDGMD) lines the ATP pocket.

It belongs to the anhydro-N-acetylmuramic acid kinase family.

It carries out the reaction 1,6-anhydro-N-acetyl-beta-muramate + ATP + H2O = N-acetyl-D-muramate 6-phosphate + ADP + H(+). It participates in amino-sugar metabolism; 1,6-anhydro-N-acetylmuramate degradation. It functions in the pathway cell wall biogenesis; peptidoglycan recycling. Functionally, catalyzes the specific phosphorylation of 1,6-anhydro-N-acetylmuramic acid (anhMurNAc) with the simultaneous cleavage of the 1,6-anhydro ring, generating MurNAc-6-P. Is required for the utilization of anhMurNAc either imported from the medium or derived from its own cell wall murein, and thus plays a role in cell wall recycling. The polypeptide is Anhydro-N-acetylmuramic acid kinase (Psychrobacter arcticus (strain DSM 17307 / VKM B-2377 / 273-4)).